The following is an 85-amino-acid chain: MWPNSILVLMTLLISSTLVTGGGVKGEEKRVCPPDYVRCIRQDDPQCYSDNDCGDQEICCFWQCGFKCVLPVKDNSEEQIPQSKV.

The N-terminal stretch at 1 to 21 (MWPNSILVLMTLLISSTLVTG) is a signal peptide. The WAP domain maps to 25 to 72 (KGEEKRVCPPDYVRCIRQDDPQCYSDNDCGDQEICCFWQCGFKCVLPV). Intrachain disulfides connect Cys-32–Cys-60, Cys-39–Cys-64, Cys-47–Cys-59, and Cys-53–Cys-68.

As to expression, constitutively expressed in tongue.

Its subcellular location is the secreted. In terms of biological role, antibacterial protein which inhibits the growth of E.coli and S.aureus. Putative acid-stable proteinase inhibitor. The polypeptide is WAP four-disulfide core domain protein 12 (Mus musculus (Mouse)).